A 144-amino-acid chain; its full sequence is Cell division protein SepF (144 aa).

A compositionally biased stretch (acidic residues) spans 14 to 31 (EDDEMNEVPYTESEEQQE). The segment at 14–41 (EDDEMNEVPYTESEEQQEEIPQTQKNER) is disordered.

The protein belongs to the SepF family. In terms of assembly, homodimer. Interacts with FtsZ.

It localises to the cytoplasm. Cell division protein that is part of the divisome complex and is recruited early to the Z-ring. Probably stimulates Z-ring formation, perhaps through the cross-linking of FtsZ protofilaments. Its function overlaps with FtsA. This chain is Cell division protein SepF, found in Lactobacillus johnsonii (strain CNCM I-12250 / La1 / NCC 533).